The sequence spans 85 residues: Sec-independent protein translocase protein TatA (85 aa).

Residues 1-21 (MGSFSIWHWLIVLLIIMMVFG) traverse the membrane as a helical segment. Positions 39–51 (FKEGMREGSEDKP) are enriched in basic and acidic residues. The interval 39-85 (FKEGMREGSEDKPAGSQQGQQAAGQPPRELHDSTTIDVEARDKSKQG) is disordered. Positions 52–65 (AGSQQGQQAAGQPP) are enriched in low complexity. The span at 66 to 85 (RELHDSTTIDVEARDKSKQG) shows a compositional bias: basic and acidic residues.

The protein belongs to the TatA/E family. In terms of assembly, the Tat system comprises two distinct complexes: a TatABC complex, containing multiple copies of TatA, TatB and TatC subunits, and a separate TatA complex, containing only TatA subunits. Substrates initially bind to the TatABC complex, which probably triggers association of the separate TatA complex to form the active translocon.

It is found in the cell inner membrane. Part of the twin-arginine translocation (Tat) system that transports large folded proteins containing a characteristic twin-arginine motif in their signal peptide across membranes. TatA could form the protein-conducting channel of the Tat system. In Ralstonia nicotianae (strain ATCC BAA-1114 / GMI1000) (Ralstonia solanacearum), this protein is Sec-independent protein translocase protein TatA.